The sequence spans 506 residues: Maturase K (506 aa).

The protein belongs to the intron maturase 2 family. MatK subfamily.

Its subcellular location is the plastid. It localises to the chloroplast. Functionally, usually encoded in the trnK tRNA gene intron. Probably assists in splicing its own and other chloroplast group II introns. This chain is Maturase K, found in Trifolium resupinatum (Persian clover).